Consider the following 253-residue polypeptide: Phosphoribosylaminoimidazole-succinocarboxamide synthase (253 aa).

The protein belongs to the SAICAR synthetase family.

It carries out the reaction 5-amino-1-(5-phospho-D-ribosyl)imidazole-4-carboxylate + L-aspartate + ATP = (2S)-2-[5-amino-1-(5-phospho-beta-D-ribosyl)imidazole-4-carboxamido]succinate + ADP + phosphate + 2 H(+). Its pathway is purine metabolism; IMP biosynthesis via de novo pathway; 5-amino-1-(5-phospho-D-ribosyl)imidazole-4-carboxamide from 5-amino-1-(5-phospho-D-ribosyl)imidazole-4-carboxylate: step 1/2. The polypeptide is Phosphoribosylaminoimidazole-succinocarboxamide synthase (Roseobacter denitrificans (strain ATCC 33942 / OCh 114) (Erythrobacter sp. (strain OCh 114))).